Reading from the N-terminus, the 493-residue chain is Glutamyl-tRNA(Gln) amidotransferase subunit A (493 aa).

Catalysis depends on charge relay system residues Lys-79 and Ser-159. Ser-183 serves as the catalytic Acyl-ester intermediate.

This sequence belongs to the amidase family. GatA subfamily. As to quaternary structure, heterotrimer of A, B and C subunits.

The enzyme catalyses L-glutamyl-tRNA(Gln) + L-glutamine + ATP + H2O = L-glutaminyl-tRNA(Gln) + L-glutamate + ADP + phosphate + H(+). Allows the formation of correctly charged Gln-tRNA(Gln) through the transamidation of misacylated Glu-tRNA(Gln) in organisms which lack glutaminyl-tRNA synthetase. The reaction takes place in the presence of glutamine and ATP through an activated gamma-phospho-Glu-tRNA(Gln). In Brucella suis biovar 1 (strain 1330), this protein is Glutamyl-tRNA(Gln) amidotransferase subunit A.